We begin with the raw amino-acid sequence, 186 residues long: MDDYTQSINDAVKCLRQGGVIAYPTEAVYGLGCDPFNHDAVAQLLTIKKRSIKKGFILIASEWKQVEPLTEPIDPKALARVFDTWPGPFTWTFPASKEAPHWITGQHSTIAIRVTAHPLAKLLCQRFAGPLISSSANQEGEPPIRDVKILRLVFGNKIDKILEGPLGPTHRPTPIRDAITGEILRL.

The YrdC-like domain occupies 5 to 186 (TQSINDAVKC…DAITGEILRL (182 aa)).

It belongs to the SUA5 family. TsaC subfamily.

It localises to the cytoplasm. The enzyme catalyses L-threonine + hydrogencarbonate + ATP = L-threonylcarbamoyladenylate + diphosphate + H2O. In terms of biological role, required for the formation of a threonylcarbamoyl group on adenosine at position 37 (t(6)A37) in tRNAs that read codons beginning with adenine. Catalyzes the conversion of L-threonine, HCO(3)(-)/CO(2) and ATP to give threonylcarbamoyl-AMP (TC-AMP) as the acyladenylate intermediate, with the release of diphosphate. The polypeptide is Threonylcarbamoyl-AMP synthase (Coxiella burnetii (strain RSA 493 / Nine Mile phase I)).